We begin with the raw amino-acid sequence, 590 residues long: O-fucosyltransferase 2 (590 aa).

Residues 1 to 16 (MGQERPNDEERPESRD) show a composition bias toward basic and acidic residues. The tract at residues 1–26 (MGQERPNDEERPESRDLGVYGCSPPH) is disordered. A helical; Signal-anchor for type II membrane protein transmembrane segment spans residues 67–87 (TAIGVMAILGFFCLVNWFMLS). Asn125 is a glycosylation site (N-linked (GlcNAc...) asparagine). Position 365–367 (365–367 (HLR)) interacts with substrate. 2 N-linked (GlcNAc...) asparagine glycosylation sites follow: Asn485 and Asn546.

This sequence belongs to the glycosyltransferase GT106 family.

It is found in the membrane. It functions in the pathway glycan metabolism. In Arabidopsis thaliana (Mouse-ear cress), this protein is O-fucosyltransferase 2.